A 285-amino-acid chain; its full sequence is Trypsin Tyr p 3.0101 (285 aa).

Residues 1-16 form the signal peptide; that stretch reads MKILLFLCFLVSVAFA. The propeptide occupies 17-33; it reads KPPTIQLKSNTKSQNGF. The region spanning 34–262 is the Peptidase S1 domain; that stretch reads IVGGTEAVDG…YLDWIELSAK (229 aa). A disulfide bond links C58 and C74. Catalysis depends on charge relay system residues H73 and D120. Intrachain disulfides connect C186–C202 and C214–C238. The active-site Charge relay system is the S218.

The protein belongs to the peptidase S1 family.

It is found in the secreted. The catalysed reaction is Preferential cleavage: Arg-|-Xaa, Lys-|-Xaa.. Its activity is regulated as follows. Inhibited by the serine protease inhibitor phenylmethylsulfonyl, and trypsin inhibitors soybean trypsin inhibitor and tosyllysine chloromethyl ketone. Not inhibited by dithiothreitol, a cysteine protease inhibitor. Digests TAMe (p-toluene arginine methyl ester), but not ethyl N-benzoyl-L-tyrosinate (BTEE). In Tyrophagus putrescentiae (Mold mite), this protein is Trypsin Tyr p 3.0101.